The chain runs to 174 residues: RNA pyrophosphohydrolase (174 aa).

The 144-residue stretch at 6–149 (GFRANVGIVI…KREVYRRAMK (144 aa)) folds into the Nudix hydrolase domain. Positions 38–59 (GGIDEGETAEQTMYRELYEEVG) match the Nudix box motif.

The protein belongs to the Nudix hydrolase family. RppH subfamily. A divalent metal cation is required as a cofactor.

In terms of biological role, accelerates the degradation of transcripts by removing pyrophosphate from the 5'-end of triphosphorylated RNA, leading to a more labile monophosphorylated state that can stimulate subsequent ribonuclease cleavage. This is RNA pyrophosphohydrolase from Pseudoalteromonas atlantica (strain T6c / ATCC BAA-1087).